The sequence spans 300 residues: Tyrosine recombinase XerC (300 aa).

The 87-residue stretch at 2 to 88 (ENVNFTLNLF…SLRSFYKFLL (87 aa)) folds into the Core-binding (CB) domain. The Tyr recombinase domain maps to 109–294 (KIPHFLYPDE…TKDHLRYVYL (186 aa)). Active-site residues include arginine 149, lysine 173, histidine 246, arginine 249, and histidine 272. The active-site O-(3'-phospho-DNA)-tyrosine intermediate is tyrosine 281.

Belongs to the 'phage' integrase family. XerC subfamily. In terms of assembly, forms a cyclic heterotetrameric complex composed of two molecules of XerC and two molecules of XerD.

Its subcellular location is the cytoplasm. Site-specific tyrosine recombinase, which acts by catalyzing the cutting and rejoining of the recombining DNA molecules. The XerC-XerD complex is essential to convert dimers of the bacterial chromosome into monomers to permit their segregation at cell division. It also contributes to the segregational stability of plasmids. In Anoxybacillus flavithermus (strain DSM 21510 / WK1), this protein is Tyrosine recombinase XerC.